The primary structure comprises 301 residues: Probable serine acetyltransferase 3 (301 aa).

The disordered stretch occupies residues 280-301; sequence IGKKAEPQRELPGVTMEQRWSD.

This sequence belongs to the transferase hexapeptide repeat family. Homomultimer.

The enzyme catalyses L-serine + acetyl-CoA = O-acetyl-L-serine + CoA. It participates in amino-acid biosynthesis; L-cysteine biosynthesis; L-cysteine from L-serine: step 1/2. In Oryza sativa subsp. japonica (Rice), this protein is Probable serine acetyltransferase 3 (SAT3).